We begin with the raw amino-acid sequence, 265 residues long: Novel plant SNARE 11 (265 aa).

Residues 1–215 (MDPISAVSEE…IGRQVATDKC (215 aa)) lie on the Cytoplasmic side of the membrane. Residues 30–75 (QKLEKIKDANRQSRQLEELTDKMRDCKSLIKDFDREIKSLESGNDA) are a coiled coil. Residues 144–206 (NSMMDDTDQA…KKASKLVKEI (63 aa)) form the t-SNARE coiled-coil homology domain. Residues 216 to 236 (IMAFLFLIVIGVIAIIIVKIV) traverse the membrane as a helical; Anchor for type IV membrane protein segment. The Vesicular segment spans residues 237 to 265 (NPNNKDIRDIPGVGLAPPAMNRRLLWNHY).

The protein belongs to the novel plant SNARE family. Interacts with KNOLLE to form a t-SNARE complex. Does not interact with SYP21, VTI12 or VPS45. In terms of tissue distribution, expressed in roots, stems, flower, siliques, expanding leaves, but not in mature leaves. Not limited to dividing cells.

The protein localises to the membrane. In terms of biological role, t-SNARE involved in diverse vesicle trafficking and membrane fusion processes, including cell plate formation. In Arabidopsis thaliana (Mouse-ear cress), this protein is Novel plant SNARE 11 (NPSN11).